Reading from the N-terminus, the 28-residue chain is Unknown protein from spot 154 of 2D-PAGE of etiolated coleoptile (28 aa).

The polypeptide is Unknown protein from spot 154 of 2D-PAGE of etiolated coleoptile (Zea mays (Maize)).